The sequence spans 393 residues: Metal tolerance protein A2 (393 aa).

The Cytoplasmic portion of the chain corresponds to 1 to 72 (MVTPKLHLDL…EAQERAASMR (72 aa)). The helical transmembrane segment at 73 to 93 (KLLIAVLLCAIFIVVEVVGGI) threads the bilayer. Topologically, residues 94 to 105 (KANSLAILTDAA) are vacuolar. A helical membrane pass occupies residues 106 to 126 (HLLSDVAAFAISLFSLWASGW). The Cytoplasmic portion of the chain corresponds to 127-138 (KANPQQSYGFFR). Residues 139 to 159 (IEILGALVSIQMIWLLAGILV) traverse the membrane as a helical segment. The Vacuolar segment spans residues 160 to 176 (YEAIVRLNNGSGEVEGS). The chain crosses the membrane as a helical span at residues 177 to 197 (LMFAVSAVGLLVNIAMAILLG). The interval 198–233 (HDHGHGHGHSHDNGHGHSHDHGHGIAATEHHHDSGH) is required for zinc-binding. At 198–257 (HDHGHGHGHSHDNGHGHSHDHGHGIAATEHHHDSGHDESQLSDVLIEQKKQRNVNIQGAY) the chain is on the cytoplasmic side. The segment covering 202-236 (HGHGHSHDNGHGHSHDHGHGIAATEHHHDSGHDES) has biased composition (basic and acidic residues). Residues 202 to 237 (HGHGHSHDNGHGHSHDHGHGIAATEHHHDSGHDESQ) form a disordered region. A helical transmembrane segment spans residues 258–278 (LHVLGDSIQSVGVMIGGAIIW). Residues 279–284 (YKPEWK) lie on the Vacuolar side of the membrane. A helical transmembrane segment spans residues 285–305 (ILDLICTLVFSVIVLGTTIGM). Topologically, residues 306-393 (LRNILEVLME…SHVTIQIERQ (88 aa)) are cytoplasmic.

The protein belongs to the cation diffusion facilitator (CDF) transporter (TC 2.A.4) family. SLC30A subfamily.

It localises to the membrane. In terms of biological role, involved in sequestration of excess zinc in the cytoplasm into vacuoles to maintain zinc homeostasis. In Arabidopsis thaliana (Mouse-ear cress), this protein is Metal tolerance protein A2 (MTPA2).